Consider the following 364-residue polypeptide: Chorismate synthase (364 aa).

Residues 41-60 form a disordered region; it reads MQHDLDRRRPGTSRYTTARR. The NADP(+) site is built by Arg48 and Arg54. Residues 125–127, 238–239, Gly278, 293–297, and Arg319 each bind FMN; these read RSS, NA, and KPTSS.

This sequence belongs to the chorismate synthase family. In terms of assembly, homotetramer. FMNH2 serves as cofactor.

It catalyses the reaction 5-O-(1-carboxyvinyl)-3-phosphoshikimate = chorismate + phosphate. It participates in metabolic intermediate biosynthesis; chorismate biosynthesis; chorismate from D-erythrose 4-phosphate and phosphoenolpyruvate: step 7/7. In terms of biological role, catalyzes the anti-1,4-elimination of the C-3 phosphate and the C-6 proR hydrogen from 5-enolpyruvylshikimate-3-phosphate (EPSP) to yield chorismate, which is the branch point compound that serves as the starting substrate for the three terminal pathways of aromatic amino acid biosynthesis. This reaction introduces a second double bond into the aromatic ring system. The sequence is that of Chorismate synthase from Shewanella putrefaciens (strain CN-32 / ATCC BAA-453).